Consider the following 233-residue polypeptide: 2,3,4,5-tetrahydropyridine-2,6-dicarboxylate N-acetyltransferase (233 aa).

This sequence belongs to the transferase hexapeptide repeat family. DapH subfamily.

The enzyme catalyses (S)-2,3,4,5-tetrahydrodipicolinate + acetyl-CoA + H2O = L-2-acetamido-6-oxoheptanedioate + CoA. It participates in amino-acid biosynthesis; L-lysine biosynthesis via DAP pathway; LL-2,6-diaminopimelate from (S)-tetrahydrodipicolinate (acetylase route): step 1/3. Its function is as follows. Catalyzes the transfer of an acetyl group from acetyl-CoA to tetrahydrodipicolinate. The sequence is that of 2,3,4,5-tetrahydropyridine-2,6-dicarboxylate N-acetyltransferase from Thermosipho africanus (strain TCF52B).